The primary structure comprises 167 residues: Putative peroxiredoxin-B (167 aa).

Residues 4–167 form the Thioredoxin domain; the sequence is IKRGDRFPTT…STAQKIIAKL (164 aa). Cysteine 53 functions as the Cysteine sulfenic acid (-SOH) intermediate in the catalytic mechanism. Residues 165–167 carry the Microbody targeting signal motif; sequence AKL.

It belongs to the peroxiredoxin family. Prx5 subfamily.

It is found in the peroxisome membrane. It carries out the reaction a hydroperoxide + [thioredoxin]-dithiol = an alcohol + [thioredoxin]-disulfide + H2O. In terms of biological role, thiol-specific peroxidase that catalyzes the reduction of hydrogen peroxide and organic hydroperoxides to water and alcohols, respectively. Plays a role in cell protection against oxidative stress by detoxifying peroxides and as sensor of hydrogen peroxide-mediated signaling events. The polypeptide is Putative peroxiredoxin-B (PMPB) (Candida boidinii (Yeast)).